Reading from the N-terminus, the 89-residue chain is Large ribosomal subunit protein bL28 (89 aa).

This sequence belongs to the bacterial ribosomal protein bL28 family.

In Chlamydia felis (strain Fe/C-56) (Chlamydophila felis), this protein is Large ribosomal subunit protein bL28.